Here is a 299-residue protein sequence, read N- to C-terminus: Phosphatidylinositol-3-phosphatase (299 aa).

The first 43 residues, 1-43 (MLRGIQALSRPLTRVYRALAVIGVLAASLLASWVGAVPQVGLA), serve as a signal peptide directing secretion.

In terms of assembly, monomer. SapM interacts with host RAB7 via its C-terminus. The cofactor is a metal cation.

Its subcellular location is the secreted. It localises to the host cytoplasmic vesicle. The protein localises to the host phagosome. It catalyses the reaction a phosphate monoester + H2O = an alcohol + phosphate. It carries out the reaction a 1,2-diacyl-sn-glycero-3-phospho-(1D-myo-inositol-3-phosphate) + H2O = a 1,2-diacyl-sn-glycero-3-phospho-(1D-myo-inositol) + phosphate. With respect to regulation, phosphatase activity is inhibited in vitro by low concentrations of several heavy metals (zinc chloride, sodium molybdate, magnesium chloride, and copper sulfate) and moderately high concentrations (&gt;8 mM) of EDTA. Its function is as follows. Virulence factor that plays an important role in blocking phagosome-lysosome fusion and thus participates in the intracellular survival of the pathogen. Acts as a phosphatase that dephosphorylates phosphatidylinositol 3-phosphate (PI3P), a membrane trafficking regulatory lipid essential for phagosomal acquisition of lysosomal constituents. Therefore, SapM eliminates PI3P from the phagosomal membrane by catalyzing its hydrolysis, and thus contributes to inhibition of phagosome maturation. Also interferes with autophagy: SapM blocks autophagosome-lysosome fusion in macrophages by binding to the small GTPase RAB7, which prevents RAB7 from being involved in this process and thus negatively regulates autophagy flux. In vitro, displays phosphatase activity with broad specificity; can dephosphorylate a variety of phosphoester substrates, with the highest activity against phosphoenolpyruvate, glycerophosphate, GTP, NADPH, phosphotyrosine and trehalose-6-phosphate. In contrast, the enzyme exhibits poor activity against glucose-6-phosphate, phosphothreonine, and a number of nucleotides (NADP, ATP, AMP, and GMP). The sequence is that of Phosphatidylinositol-3-phosphatase from Mycobacterium tuberculosis (strain ATCC 25618 / H37Rv).